The primary structure comprises 94 residues: Conotoxin Im026 (94 aa).

Positions 1–24 (MRLTTMHSVILMLLLVFAFDNVDG) are cleaved as a signal peptide. A propeptide spanning residues 25-59 (DEPGQTARDVDNRNFMSILRSEGKPVHFLRAIKKR) is cleaved from the precursor.

Post-translationally, contains 4 disulfide bonds. Expressed by the venom duct.

It is found in the secreted. Functionally, probable neurotoxin. The polypeptide is Conotoxin Im026 (Conus imperialis (Imperial cone)).